The following is a 457-amino-acid chain: UDP-N-acetylmuramate--L-alanine ligase (457 aa).

Residue 109-115 (GTDGKTT) participates in ATP binding.

The protein belongs to the MurCDEF family.

It localises to the cytoplasm. It carries out the reaction UDP-N-acetyl-alpha-D-muramate + L-alanine + ATP = UDP-N-acetyl-alpha-D-muramoyl-L-alanine + ADP + phosphate + H(+). Its pathway is cell wall biogenesis; peptidoglycan biosynthesis. In terms of biological role, cell wall formation. The protein is UDP-N-acetylmuramate--L-alanine ligase of Thermotoga neapolitana (strain ATCC 49049 / DSM 4359 / NBRC 107923 / NS-E).